Here is a 265-residue protein sequence, read N- to C-terminus: NAD kinase (265 aa).

D45 acts as the Proton acceptor in catalysis. Residues 45-46 (DG), 121-122 (NE), R147, D149, 160-165 (TAYSKS), A184, and Q222 contribute to the NAD(+) site.

Belongs to the NAD kinase family. A divalent metal cation serves as cofactor.

The protein localises to the cytoplasm. The enzyme catalyses NAD(+) + ATP = ADP + NADP(+) + H(+). Its function is as follows. Involved in the regulation of the intracellular balance of NAD and NADP, and is a key enzyme in the biosynthesis of NADP. Catalyzes specifically the phosphorylation on 2'-hydroxyl of the adenosine moiety of NAD to yield NADP. This is NAD kinase from Lacticaseibacillus paracasei (strain ATCC 334 / BCRC 17002 / CCUG 31169 / CIP 107868 / KCTC 3260 / NRRL B-441) (Lactobacillus paracasei).